A 521-amino-acid polypeptide reads, in one-letter code: MKIDMMTMILAVIAAAIGFLIGNLLRKKSSDAIVASAEELAAKMVEESKRQAETITKEASLQAKDVVYQAKADFERETKDKRRDLQALEKRLQQKEENLDKKMNLFDQRDAEFLKREQGLAAKEQVLGQKDEKLNQLISEERTRLENISGMTAAEAKKILMETMENEAKLDAAKRIKAIEEEARETADKKSKEIMALAIQRYAGEYVAERTVSVVALPSDEMKGRIIGREGRNIRALEAATGIDLIIDDTPEAVILSGFNPVRREVAKLSLEKLIADGRIHPGRIEEVVAKAEEEVELAMKEAGEQAAFDLGVHGIHPEILKLIGRLKYRTSYSQNVYQHSLEVAFLCGIMAAELGINVKQAKRAGLLHDLGKAVDHEVEGSHAVIGAELAKKYGESPKIVHAIMAHHEDEKPATVLAILVQAADALSGARPGARREMMETYVKRLDDLERIACSFSGVTNSFAIQAGREIRVMVSSEEISDERTLILAKDIAKKIETEMTYPGQIKINVIRETRATEYAR.

A helical transmembrane segment spans residues 5 to 25 (MMTMILAVIAAAIGFLIGNLL). Residues 211–271 (TVSVVALPSD…VRREVAKLSL (61 aa)) enclose the KH domain. Residues 337–430 (VYQHSLEVAF…VQAADALSGA (94 aa)) enclose the HD domain.

Belongs to the RNase Y family.

It localises to the cell membrane. In terms of biological role, endoribonuclease that initiates mRNA decay. The sequence is that of Ribonuclease Y from Geotalea uraniireducens (strain Rf4) (Geobacter uraniireducens).